We begin with the raw amino-acid sequence, 147 residues long: UPF0306 protein YhbP (147 aa).

It belongs to the UPF0306 family.

This is UPF0306 protein YhbP from Escherichia coli (strain SMS-3-5 / SECEC).